Here is a 293-residue protein sequence, read N- to C-terminus: Putative F-box/kelch-repeat protein At4g34170 (293 aa).

The region spanning 9 to 55 (VKTMLMLHDDLILNCLARVSRSNHPTLSLVCKRFHSLLASVELYQTR) is the F-box domain. Kelch repeat units lie at residues 94-140 (NIDA…TLDG), 141-187 (KIYV…ESVR), and 226-272 (SYCV…LADY).

This chain is Putative F-box/kelch-repeat protein At4g34170, found in Arabidopsis thaliana (Mouse-ear cress).